Here is a 90-residue protein sequence, read N- to C-terminus: Probable Fe(2+)-trafficking protein (90 aa).

It belongs to the Fe(2+)-trafficking protein family. As to quaternary structure, monomer.

In terms of biological role, could be a mediator in iron transactions between iron acquisition and iron-requiring processes, such as synthesis and/or repair of Fe-S clusters in biosynthetic enzymes. This is Probable Fe(2+)-trafficking protein from Yersinia pseudotuberculosis serotype O:1b (strain IP 31758).